A 118-amino-acid polypeptide reads, in one-letter code: Large ribosomal subunit protein bL20 (118 aa).

The protein belongs to the bacterial ribosomal protein bL20 family.

Its function is as follows. Binds directly to 23S ribosomal RNA and is necessary for the in vitro assembly process of the 50S ribosomal subunit. It is not involved in the protein synthesizing functions of that subunit. The sequence is that of Large ribosomal subunit protein bL20 from Staphylococcus carnosus (strain TM300).